The primary structure comprises 347 residues: Phosphoribosylformylglycinamidine cyclo-ligase (347 aa).

This sequence belongs to the AIR synthase family.

The protein resides in the cytoplasm. It carries out the reaction 2-formamido-N(1)-(5-O-phospho-beta-D-ribosyl)acetamidine + ATP = 5-amino-1-(5-phospho-beta-D-ribosyl)imidazole + ADP + phosphate + H(+). It participates in purine metabolism; IMP biosynthesis via de novo pathway; 5-amino-1-(5-phospho-D-ribosyl)imidazole from N(2)-formyl-N(1)-(5-phospho-D-ribosyl)glycinamide: step 2/2. This chain is Phosphoribosylformylglycinamidine cyclo-ligase, found in Dechloromonas aromatica (strain RCB).